The sequence spans 134 residues: Protein X (134 aa).

The segment at 25–48 (SRGRPVSGPFGPLPSPSSSAVPAD) is disordered. Residues 29–47 (PVSGPFGPLPSPSSSAVPA) show a composition bias toward low complexity. Residues 68 to 117 (PCALRLTSARRMETTVNAHQVLPKVLHKRTLGLSAMSTTDLEAYFKDCLF) form a mitochondrial targeting sequence region.

It belongs to the orthohepadnavirus protein X family. May form homodimer. May interact with host CEBPA, CFLAR, CREB1, DDB1, E4F1, HBXIP, HSPD1/HSP60, NFKBIA, POLR2E and SMAD4. Interacts with host SMC5-SMC6 complex and induces its degradation. Interacts with host TRPC4AP; leading to prevent ubiquitination of TRPC4AP. Interacts with host PLSCR1; this interaction promotes ubiquitination and degradation of HBx and impairs HBx-mediated cell proliferation. A fraction may be phosphorylated in insect cells and HepG2 cells, a human hepatoblastoma cell line. Phosphorylated in vitro by host protein kinase C or mitogen-activated protein kinase. N-acetylated in insect cells.

It is found in the host cytoplasm. The protein resides in the host nucleus. Its subcellular location is the host mitochondrion. In terms of biological role, multifunctional protein that plays a role in silencing host antiviral defenses and promoting viral transcription. Does not seem to be essential for HBV infection. May be directly involved in development of cirrhosis and liver cancer (hepatocellular carcinoma). Most of cytosolic activities involve modulation of cytosolic calcium. The effect on apoptosis is controversial depending on the cell types in which the studies have been conducted. May induce apoptosis by localizing in mitochondria and causing loss of mitochondrial membrane potential. May also modulate apoptosis by binding host CFLAR, a key regulator of the death-inducing signaling complex (DISC). Promotes viral transcription by using the host E3 ubiquitin ligase DDB1 to target the SMC5-SMC6 complex to proteasomal degradation. This host complex would otherwise bind to viral episomal DNA, and prevents its transcription. Moderately stimulates transcription of many different viral and cellular transcription elements. Promoters and enhancers stimulated by HBx contain DNA binding sites for NF-kappa-B, AP-1, AP-2, c-EBP, ATF/CREB, or the calcium-activated factor NF-AT. The protein is Protein X of Homo sapiens (Human).